The sequence spans 1037 residues: Cysteine-rich motor neuron 1 protein (1037 aa).

A signal peptide spans 1–34 (MYLVAGGRGLAGCGHLSVSLLGLLLLLARSGTRA). Residues 35–112 (LVCLPCDESK…EYEVGVCEDE (78 aa)) enclose the IGFBP N-terminal domain. The Extracellular portion of the chain corresponds to 35–940 (LVCLPCDESK…HPGEDSSLDS (906 aa)). 6 disulfides stabilise this stretch: Cys-37/Cys-60, Cys-40/Cys-62, Cys-45/Cys-63, Cys-51/Cys-66, Cys-74/Cys-90, and Cys-84/Cys-109. Positions 314 to 316 (RGD) match the Cell attachment site motif. Residue Asn-330 is glycosylated (N-linked (GlcNAc...) asparagine). 2 consecutive VWFC domains span residues 334-391 (PACV…PVCE) and 401-457 (AGCY…PVCE). Antistasin-like domains follow at residues 469-498 (CGEL…TCQC), 505-532 (CLGL…LCQC), 539-564 (CRPT…ICRC), and 567-592 (CPEL…ICKC). VWFC domains follow at residues 606–663 (GTCL…PSCT), 677–735 (SICH…PQCT), 751–809 (SYCR…PYCL), and 817–874 (VVCH…PMCP). Residues 941–961 (IVSVVVPIIICLSIIIAFLLI) traverse the membrane as a helical segment. Over 962-1037 (NQKKQWVPLL…LQADNFYQTV (76 aa)) the chain is Cytoplasmic. At Thr-1036 the chain carries Phosphothreonine.

Interacts with BMP4 and BMP7. As to expression, expressed during embryonic development in brain, kidney, spinal cord, testis, lens, vibrissae, pinna, tooth primordia and in specific regions of the CNS. Expressed in adult lens. Displays male-specific expression in the fetal gonads with the strongest expression in the Sertoli cells of developing testis.

The protein localises to the membrane. Functionally, may play a role in CNS development by interacting with growth factors implicated in motor neuron differentiation and survival. May play a role in capillary formation and maintenance during angiogenesis. Modulates BMP activity by affecting its processing and delivery to the cell surface. The chain is Cysteine-rich motor neuron 1 protein (Crim1) from Mus musculus (Mouse).